Reading from the N-terminus, the 689-residue chain is Glycine--tRNA ligase beta subunit (689 aa).

This sequence belongs to the class-II aminoacyl-tRNA synthetase family. In terms of assembly, tetramer of two alpha and two beta subunits.

The protein localises to the cytoplasm. It carries out the reaction tRNA(Gly) + glycine + ATP = glycyl-tRNA(Gly) + AMP + diphosphate. The chain is Glycine--tRNA ligase beta subunit from Shewanella sp. (strain W3-18-1).